Here is a 445-residue protein sequence, read N- to C-terminus: MGNQENKLYHFVGIKGSGMSSLALVLHQKGYNVQGSDVEEYFFTQRDLEKSGVPILPFNADNIDKDMIVIAGNAFPDTHEEIARAIELGAEVIRYHDFIARFIEPYTSIAVTGSHGKTSTTGLLAHVLSGINPTSYLIGDGTGHGEPDADFFAFEACEYRRHFLAYSPDYAIMTNIDFDHPDYYKSIEDVFSAFQTMAHQVKKGIFAYGDDKYLRQLESEVPVYYYGVSEEDDIQARNIQRTTEGSSFDVYHKDDFVGHFVLPAFGHHNIMNALGVIAVAYFEKLDMQKVAEEMLSFKGVKRRFSEKKVSDMIIVDDYAHHPAEIKATIDGARQKYPDKEIIAVFQPHTFTRTIALMDEFAEALDLADEVFLCNIFGSARETQGEVRIEDLGEKIQKGGQVITEDNVSPLLDFENAVVVFMGAGDVQKFEQAYETLLSNTTRNVL.

An ATP-binding site is contributed by 113–119; that stretch reads GSHGKTS.

The protein belongs to the MurCDEF family.

It is found in the cytoplasm. The catalysed reaction is UDP-N-acetyl-alpha-D-muramate + L-alanine + ATP = UDP-N-acetyl-alpha-D-muramoyl-L-alanine + ADP + phosphate + H(+). It participates in cell wall biogenesis; peptidoglycan biosynthesis. Functionally, cell wall formation. This is UDP-N-acetylmuramate--L-alanine ligase from Enterococcus faecalis (strain ATCC 700802 / V583).